The primary structure comprises 68 residues: ATP synthase F(0) complex subunit 8 (68 aa).

A helical membrane pass occupies residues 8 to 24; sequence TWFTIIMAMLPTLYLIT. N6-acetyllysine; alternate is present on K54. K54 carries the N6-succinyllysine; alternate modification. Residue K57 is modified to N6-acetyllysine.

This sequence belongs to the ATPase protein 8 family. As to quaternary structure, component of the ATP synthase complex composed at least of ATP5F1A/subunit alpha, ATP5F1B/subunit beta, ATP5MC1/subunit c (homooctomer), MT-ATP6/subunit a, MT-ATP8/subunit 8, ATP5ME/subunit e, ATP5MF/subunit f, ATP5MG/subunit g, ATP5MK/subunit k, ATP5MJ/subunit j, ATP5F1C/subunit gamma, ATP5F1D/subunit delta, ATP5F1E/subunit epsilon, ATP5PF/subunit F6, ATP5PB/subunit b, ATP5PD/subunit d, ATP5PO/subunit OSCP. ATP synthase complex consists of a soluble F(1) head domain (subunits alpha(3) and beta(3)) - the catalytic core - and a membrane F(0) domain - the membrane proton channel (subunits c, a, 8, e, f, g, k and j). These two domains are linked by a central stalk (subunits gamma, delta, and epsilon) rotating inside the F1 region and a stationary peripheral stalk (subunits F6, b, d, and OSCP). Interacts with PRICKLE3.

The protein resides in the mitochondrion membrane. Its function is as follows. Subunit 8, of the mitochondrial membrane ATP synthase complex (F(1)F(0) ATP synthase or Complex V) that produces ATP from ADP in the presence of a proton gradient across the membrane which is generated by electron transport complexes of the respiratory chain. ATP synthase complex consist of a soluble F(1) head domain - the catalytic core - and a membrane F(1) domain - the membrane proton channel. These two domains are linked by a central stalk rotating inside the F(1) region and a stationary peripheral stalk. During catalysis, ATP synthesis in the catalytic domain of F(1) is coupled via a rotary mechanism of the central stalk subunits to proton translocation. In vivo, can only synthesize ATP although its ATP hydrolase activity can be activated artificially in vitro. Part of the complex F(0) domain. This chain is ATP synthase F(0) complex subunit 8, found in Papio hamadryas (Hamadryas baboon).